The chain runs to 273 residues: 3-methyl-2-oxobutanoate hydroxymethyltransferase (273 aa).

Residues aspartate 53 and aspartate 92 each contribute to the Mg(2+) site. 3-methyl-2-oxobutanoate contacts are provided by residues 53 to 54, aspartate 92, and lysine 122; that span reads DS. A Mg(2+)-binding site is contributed by glutamate 124. The active-site Proton acceptor is the glutamate 191.

This sequence belongs to the PanB family. As to quaternary structure, homodecamer; pentamer of dimers. Mg(2+) is required as a cofactor.

It is found in the cytoplasm. The catalysed reaction is 3-methyl-2-oxobutanoate + (6R)-5,10-methylene-5,6,7,8-tetrahydrofolate + H2O = 2-dehydropantoate + (6S)-5,6,7,8-tetrahydrofolate. Its pathway is cofactor biosynthesis; (R)-pantothenate biosynthesis; (R)-pantoate from 3-methyl-2-oxobutanoate: step 1/2. Catalyzes the reversible reaction in which hydroxymethyl group from 5,10-methylenetetrahydrofolate is transferred onto alpha-ketoisovalerate to form ketopantoate. This is 3-methyl-2-oxobutanoate hydroxymethyltransferase from Porphyromonas gingivalis (strain ATCC 33277 / DSM 20709 / CIP 103683 / JCM 12257 / NCTC 11834 / 2561).